The sequence spans 82 residues: Putative membrane protein insertion efficiency factor (82 aa).

It belongs to the UPF0161 family.

The protein resides in the cell inner membrane. In terms of biological role, could be involved in insertion of integral membrane proteins into the membrane. The protein is Putative membrane protein insertion efficiency factor of Rickettsia massiliae (strain Mtu5).